The sequence spans 1225 residues: Clustered mitochondria protein homolog (1225 aa).

The segment at 1 to 22 (MAQTNGEMEHSKESPEQITNGN) is disordered. The 252-residue stretch at 281 to 532 (QESNNQKDLL…RVTPLDVAWN (252 aa)) folds into the Clu domain. Disordered regions lie at residues 577-605 (EEAAKKEKSSEDTESKEEGSEEKSEEALD) and 846-878 (ANGVNGTGQDEGSKKKKKNKNGDSGSPARSAAA). TPR repeat units lie at residues 949–982 (AKLYHQLSMLYYQTDEKDAAVELARKAVIVTERT), 991–1024 (ILSYLNLSLFEHASGNTKVALAYIKHAMDLWKII), and 1033–1066 (ITTMNNAAVMLQHLKQYSDSRKWFEASLSVCESL). Residues 1153–1184 (RTTLGTQIQPQVGQSTADVSAPSQASNSSIDS) show a composition bias toward polar residues. The tract at residues 1153–1225 (RTTLGTQIQP…KLRGSKKSSA (73 aa)) is disordered.

This sequence belongs to the CLU family. In terms of assembly, may associate with the eukaryotic translation initiation factor 3 (eIF-3) complex.

It is found in the cytoplasm. In terms of biological role, mRNA-binding protein involved in proper cytoplasmic distribution of mitochondria. The protein is Clustered mitochondria protein homolog of Emericella nidulans (strain FGSC A4 / ATCC 38163 / CBS 112.46 / NRRL 194 / M139) (Aspergillus nidulans).